The sequence spans 67 residues: Putative antitoxin PF1308 (67 aa).

The protein belongs to the UPF0165 family.

Its function is as follows. Possibly the antitoxin component of a type II toxin-antitoxin (TA) system. In Pyrococcus furiosus (strain ATCC 43587 / DSM 3638 / JCM 8422 / Vc1), this protein is Putative antitoxin PF1308.